The sequence spans 60 residues: MNFTKLFILVAIAVLVVVGVQPVDGAPRWKFGKRLEKLGRNVFRAAKKALPVIAGYKALG.

A signal peptide spans 1 to 25; the sequence is MNFTKLFILVAIAVLVVVGVQPVDG. The residue at position 59 (Leu-59) is a Leucine amide.

The protein belongs to the cecropin family.

The protein resides in the secreted. In terms of biological role, cecropins have lytic and antibacterial activity against several Gram-positive and Gram-negative bacteria. The protein is Cecropin-B (CecB) of Anopheles gambiae (African malaria mosquito).